We begin with the raw amino-acid sequence, 61 residues long: Metallothionein-I, hippocampal (61 aa).

M1 carries the post-translational modification N-acetylmethionine. Positions 1–29 are beta; that stretch reads MDPNCSCATGDSCACASTCKCKECKCTSC. Residues C5, C7, C13, C15, C19, C21, C24, C26, C29, C33, C34, C36, C37, C41, C44, C48, C50, and C57 each contribute to the a divalent metal cation site. Residues 30–61 are alpha; the sequence is KKSCCSCCPVGCAKCAQGCICKGASDKCSCCA. At S58 the chain carries Phosphoserine. A divalent metal cation contacts are provided by C59 and C60.

This sequence belongs to the metallothionein superfamily. Type 1 family.

In terms of biological role, metallothioneins have a high content of cysteine residues that bind various heavy metals; these proteins are transcriptionally regulated by both heavy metals and glucocorticoids. This isoform may play a role in regulating the transport, accumulation, and compartmentation of zinc in the hippocampus. The polypeptide is Metallothionein-I, hippocampal (Bos taurus (Bovine)).